The following is a 144-amino-acid chain: Large ribosomal subunit protein uL15 (144 aa).

The tract at residues 1-54 (MRLNTLSPAEGSKKAGKRLGRGIGSGLGKTGGRGHKGQKSRSGGGVRRGFEGGQ) is disordered. Residues 21–31 (RGIGSGLGKTG) are compositionally biased toward gly residues.

This sequence belongs to the universal ribosomal protein uL15 family. In terms of assembly, part of the 50S ribosomal subunit.

Functionally, binds to the 23S rRNA. The chain is Large ribosomal subunit protein uL15 from Salmonella enteritidis PT4 (strain P125109).